A 1036-amino-acid polypeptide reads, in one-letter code: Integrin alpha-9 (1036 aa).

An N-terminal signal peptide occupies residues 1-28 (MGGPAAARTGAGGLRALLLALVAAGVPA). Topologically, residues 29 to 981 (GAYNLDAQRP…NLEPRGYVVG (953 aa)) are extracellular. 7 FG-GAP repeats span residues 36–97 (QRPV…PDRR), 109–175 (RGAP…AKGK), 183–233 (EYKK…NTYF), 234–290 (KLND…SGTL), 291–350 (IKIF…GALE), 352–409 (QLTL…GIVP), and 412–475 (SMKL…LPGS). 3 disulfides stabilise this stretch: cysteine 88–cysteine 98, cysteine 143–cysteine 163, and cysteine 180–cysteine 195. A glycan (N-linked (GlcNAc...) asparagine) is linked at asparagine 226. Residues aspartate 313, asparagine 315, aspartate 317, aspartate 321, aspartate 374, aspartate 376, aspartate 378, aspartate 382, aspartate 436, aspartate 438, asparagine 440, and aspartate 444 each coordinate Ca(2+). Cysteine 483 and cysteine 492 are oxidised to a cystine. N-linked (GlcNAc...) asparagine glycosylation is found at asparagine 494 and asparagine 515. 3 cysteine pairs are disulfide-bonded: cysteine 498–cysteine 556, cysteine 621–cysteine 626, and cysteine 697–cysteine 707. Residue asparagine 808 is glycosylated (N-linked (GlcNAc...) asparagine). Disulfide bonds link cysteine 856–cysteine 892 and cysteine 899–cysteine 904. The helical transmembrane segment at 982–1002 (WIIAISLLVGILIFLLLAVLL) threads the bilayer. Topologically, residues 1003-1036 (WKMGFFRRRYKEIIEAEKNRKENEDGWDWVQKNQ) are cytoplasmic. Positions 1006-1010 (GFFRR) match the GFFKR motif motif.

Belongs to the integrin alpha chain family. As to quaternary structure, heterodimer of an alpha and a beta subunit. Alpha-9 (ITGA9) associates with beta-1 (ITGB1). Integrin ITGA9:ITGB1 interacts with FBLN5 (via N-terminus). Integrin ITGA9:ITGB1 interacts with SPP1/OPN (via N-terminus). Integrin ITGA9:ITGB1 interacts with TNC/TNFN3 (via the 3rd Fibronectin type-III domain). Integrin ITGA9:ITGB1 interacts with SVEP1/polydom (via Sushi domain 21); thereby inhibits Ca(2+) intracellular signaling and as a result represses vasocontraction. Expressed in the media layer of the arterial wall (at protein level). Expressed in the airway epithelium, skeletal muscle, basal keratincytes, the basal epithelium of the cornea, hepatocytes, giant cells in the spleen and smooth muscle of the stomach, duodenum and veins (at protein level).

It localises to the membrane. In terms of biological role, integrin alpha-9/beta-1 (ITGA9:ITGB1) is a receptor for VCAM1, cytotactin and osteopontin. It recognizes the sequence A-E-I-D-G-I-E-L in cytotactin. ITGA9:ITGB1 may play a crucial role in SVEP1/polydom-mediated myoblast cell adhesion. Integrin ITGA9:ITGB1 represses PRKCA-mediated L-type voltage-gated channel Ca(2+) influx and ROCK-mediated calcium sensitivity in vascular smooth muscle cells via its interaction with SVEP1, thereby inhibiting vasocontraction. This Mus musculus (Mouse) protein is Integrin alpha-9.